Here is a 295-residue protein sequence, read N- to C-terminus: Small ribosomal subunit biogenesis GTPase RsgA (295 aa).

The 161-residue stretch at 68–228 folds into the CP-type G domain; that stretch reads KNLLTKPHVA…VVDTPGFANL (161 aa). Residues 117-120 and 170-178 contribute to the GTP site; these read NKMD and GLSGVGKSS. Cysteine 250, cysteine 255, histidine 257, and cysteine 263 together coordinate Zn(2+).

It belongs to the TRAFAC class YlqF/YawG GTPase family. RsgA subfamily. Monomer. Associates with 30S ribosomal subunit, binds 16S rRNA. Requires Zn(2+) as cofactor.

Its subcellular location is the cytoplasm. One of several proteins that assist in the late maturation steps of the functional core of the 30S ribosomal subunit. Helps release RbfA from mature subunits. May play a role in the assembly of ribosomal proteins into the subunit. Circularly permuted GTPase that catalyzes slow GTP hydrolysis, GTPase activity is stimulated by the 30S ribosomal subunit. The polypeptide is Small ribosomal subunit biogenesis GTPase RsgA (Thermotoga petrophila (strain ATCC BAA-488 / DSM 13995 / JCM 10881 / RKU-1)).